We begin with the raw amino-acid sequence, 120 residues long: Large ribosomal subunit protein uL18 (120 aa).

This sequence belongs to the universal ribosomal protein uL18 family. In terms of assembly, part of the 50S ribosomal subunit; part of the 5S rRNA/L5/L18/L25 subcomplex. Contacts the 5S and 23S rRNAs.

In terms of biological role, this is one of the proteins that bind and probably mediate the attachment of the 5S RNA into the large ribosomal subunit, where it forms part of the central protuberance. The protein is Large ribosomal subunit protein uL18 of Staphylococcus saprophyticus subsp. saprophyticus (strain ATCC 15305 / DSM 20229 / NCIMB 8711 / NCTC 7292 / S-41).